Reading from the N-terminus, the 1634-residue chain is DNA polymerase (1634 aa).

DOD-type homing endonuclease domains lie at 552–693 (LIGI…RLGI) and 1163–1295 (FLGF…LVGI).

This sequence belongs to the DNA polymerase type-B family. Post-translationally, this protein undergoes a protein self splicing that involves a post-translational excision of the intervening region (intein) followed by peptide ligation.

The enzyme catalyses DNA(n) + a 2'-deoxyribonucleoside 5'-triphosphate = DNA(n+1) + diphosphate. This chain is DNA polymerase (pol), found in Methanocaldococcus jannaschii (strain ATCC 43067 / DSM 2661 / JAL-1 / JCM 10045 / NBRC 100440) (Methanococcus jannaschii).